The sequence spans 117 residues: Large ribosomal subunit protein bL20 (117 aa).

It belongs to the bacterial ribosomal protein bL20 family.

Binds directly to 23S ribosomal RNA and is necessary for the in vitro assembly process of the 50S ribosomal subunit. It is not involved in the protein synthesizing functions of that subunit. This is Large ribosomal subunit protein bL20 from Magnetococcus marinus (strain ATCC BAA-1437 / JCM 17883 / MC-1).